The following is a 330-amino-acid chain: Succinylglutamate desuccinylase (330 aa).

The Zn(2+) site is built by H53, E56, and H147. E210 is a catalytic residue.

It belongs to the AspA/AstE family. Succinylglutamate desuccinylase subfamily. Zn(2+) serves as cofactor.

The enzyme catalyses N-succinyl-L-glutamate + H2O = L-glutamate + succinate. The protein operates within amino-acid degradation; L-arginine degradation via AST pathway; L-glutamate and succinate from L-arginine: step 5/5. Functionally, transforms N(2)-succinylglutamate into succinate and glutamate. The sequence is that of Succinylglutamate desuccinylase from Yersinia pseudotuberculosis serotype O:1b (strain IP 31758).